Here is a 992-residue protein sequence, read N- to C-terminus: Translation initiation factor IF-2 (992 aa).

2 disordered regions span residues 154-173 (RRLR…EREA) and 338-399 (AAPG…RPES). The tr-type G domain maps to 492–661 (PRAPVVTVMG…LLQAEVLELK (170 aa)). Residues 501–508 (GHVDHGKT) form a G1 region. GTP is bound at residue 501-508 (GHVDHGKT). A G2 region spans residues 526 to 530 (GITQH). The tract at residues 547–550 (DTPG) is G3. Residues 547 to 551 (DTPGH) and 601 to 604 (NKID) contribute to the GTP site. Positions 601–604 (NKID) are G4. The tract at residues 637 to 639 (SAH) is G5.

Belongs to the TRAFAC class translation factor GTPase superfamily. Classic translation factor GTPase family. IF-2 subfamily.

Its subcellular location is the cytoplasm. One of the essential components for the initiation of protein synthesis. Protects formylmethionyl-tRNA from spontaneous hydrolysis and promotes its binding to the 30S ribosomal subunits. Also involved in the hydrolysis of GTP during the formation of the 70S ribosomal complex. This chain is Translation initiation factor IF-2, found in Polaromonas naphthalenivorans (strain CJ2).